Reading from the N-terminus, the 78-residue chain is Chassatide C4 (78 aa).

Residues 1-23 (MAKFATQLFLLTASVVMLEVQSS) form the signal peptide. Residues 24–42 (IVIMQDPDLGRKLIMNPAN) constitute a propeptide, removed in mature form. Residues 43–71 (GASCGETCFTGICFTAGCSCNPWPTCTRN) constitute a cross-link (cyclopeptide (Gly-Asn)). 3 disulfides stabilise this stretch: Cys46-Cys60, Cys50-Cys62, and Cys55-Cys68. A propeptide spans 72-78 (GLNPESI) (removed in mature form).

In terms of processing, this is a cyclic peptide.

Probably participates in a plant defense mechanism. This is Chassatide C4 from Chassalia chartacea (Chassalia curviflora).